The chain runs to 574 residues: VAO-type flavoprotein oxidase VAO615 (574 aa).

The signal sequence occupies residues 1–17 (MPASLLRFLALAGTAVG). 4 cysteine pairs are disulfide-bonded: Cys-28–Cys-572, Cys-64–Cys-77, Cys-108–Cys-118, and Cys-450–Cys-476. Asn-47 is a glycosylation site (N-linked (GlcNAc...) asparagine). Asn-105 carries an N-linked (GlcNAc...) asparagine glycan. The region spanning 120–299 (LGNYPSYVVN…LSMTARLHRD (180 aa)) is the FAD-binding PCMH-type domain. N-linked (GlcNAc...) asparagine glycans are attached at residues Asn-129, Asn-211, Asn-310, Asn-346, and Asn-438. Residues 157–222 (HDYLGKSTGK…TGHRIVGGTC (66 aa)) constitute a cross-link (6-(S-cysteinyl)-8alpha-(pros-histidyl)-FAD (His-Cys)).

It belongs to the oxygen-dependent FAD-linked oxidoreductase family. FAD is required as a cofactor. Post-translationally, the FAD cofactor is bound via a bicovalent 6-S-cysteinyl, 8alpha-N1-histidyl FAD linkage.

The protein localises to the secreted. Probably oxidoreductase that, when reduced, rapidly reacts with molecular oxygen, a hallmark of flavoprotein oxidases. A large panel of alcohols, including carbohydrates, steroids and secondary alcohols were tested as potential substrates, but none has been identified so far. The sequence is that of VAO-type flavoprotein oxidase VAO615 from Thermothelomyces thermophilus (strain ATCC 42464 / BCRC 31852 / DSM 1799) (Sporotrichum thermophile).